Reading from the N-terminus, the 364-residue chain is Chorismate synthase (364 aa).

Residue R48 participates in NADP(+) binding. FMN is bound by residues 131-133 (RSS), 243-244 (NA), G288, 303-307 (KPTSS), and R329.

It belongs to the chorismate synthase family. Homotetramer. Requires FMNH2 as cofactor.

It carries out the reaction 5-O-(1-carboxyvinyl)-3-phosphoshikimate = chorismate + phosphate. The protein operates within metabolic intermediate biosynthesis; chorismate biosynthesis; chorismate from D-erythrose 4-phosphate and phosphoenolpyruvate: step 7/7. Its function is as follows. Catalyzes the anti-1,4-elimination of the C-3 phosphate and the C-6 proR hydrogen from 5-enolpyruvylshikimate-3-phosphate (EPSP) to yield chorismate, which is the branch point compound that serves as the starting substrate for the three terminal pathways of aromatic amino acid biosynthesis. This reaction introduces a second double bond into the aromatic ring system. This Brucella melitensis biotype 2 (strain ATCC 23457) protein is Chorismate synthase.